Consider the following 355-residue polypeptide: S-methyl-5'-thioadenosine phosphorylase (355 aa).

Phosphate-binding positions include Thr-45, 91–92, and 124–125; these read RH and SA. Met-226 serves as a coordination point for substrate. Ser-227 is a phosphate binding site. A substrate-binding site is contributed by 250 to 252; that stretch reads DYD.

Belongs to the PNP/MTAP phosphorylase family. MTAP subfamily. Homotrimer.

It localises to the cytoplasm. The protein resides in the nucleus. It catalyses the reaction S-methyl-5'-thioadenosine + phosphate = 5-(methylsulfanyl)-alpha-D-ribose 1-phosphate + adenine. The protein operates within amino-acid biosynthesis; L-methionine biosynthesis via salvage pathway; S-methyl-5-thio-alpha-D-ribose 1-phosphate from S-methyl-5'-thioadenosine (phosphorylase route): step 1/1. Functionally, catalyzes the reversible phosphorylation of S-methyl-5'-thioadenosine (MTA) to adenine and 5-methylthioribose-1-phosphate. Involved in the breakdown of MTA, a major by-product of polyamine biosynthesis. Responsible for the first step in the methionine salvage pathway after MTA has been generated from S-adenosylmethionine. Has broad substrate specificity with 6-aminopurine nucleosides as preferred substrates. The sequence is that of S-methyl-5'-thioadenosine phosphorylase from Emericella nidulans (strain FGSC A4 / ATCC 38163 / CBS 112.46 / NRRL 194 / M139) (Aspergillus nidulans).